Consider the following 476-residue polypeptide: RuvB-like 1 (476 aa).

The tract at residues 1-23 is disordered; that stretch reads MDMEVDEAISGTSSSRLAPIEEV. Residue 89 to 96 participates in ATP binding; that stretch reads GPPATGKT.

The protein belongs to the RuvB family. As to quaternary structure, forms homohexameric rings. May form a dodecamer with ruvb-2 made of two stacked hexameric rings. As to expression, expressed in gonadal cells.

Its subcellular location is the cytoplasm. It localises to the nucleus. It catalyses the reaction ATP + H2O = ADP + phosphate + H(+). Possesses single-stranded DNA-stimulated ATPase and ATP dependent DNA helicase (3' to 5') activity suggesting a role in nuclear processes such as recombination and transcription. May participate in several chromatin remodeling complexes that mediate the ATP-dependent exchange of histones and remodel chromatin by shifting nucleosomes. Involvement in these complexes is likely required for transcriptional activation of selected genes and DNA repair in response to DNA damage. Involved in the Ce-Tor signaling pathway whereby it is required for the accumulation and localization of box C/D snoRNP to nucleoli to regulate ribosomal maturation and thus protein synthesis. Antagonizes the transcriptional activity of transcription factor pha-4, to control postembryonic development and adult longevity. Has a role in pharyngeal development. Has a role in gonadal development. This is RuvB-like 1 from Caenorhabditis elegans.